Here is a 631-residue protein sequence, read N- to C-terminus: Mu-like prophage FluMu protein gp42 (631 aa).

The next 2 membrane-spanning stretches (helical) occupy residues 56 to 76 (LGNI…TMVG) and 385 to 405 (GLAD…PVYV). Residues 425–453 (IEDGRDKDKKTQKKNKPPRPKRGRGSVRS) form a disordered region. Basic residues predominate over residues 434–449 (KTQKKNKPPRPKRGRG). Helical transmembrane passes span 455-475 (VAAV…VTTA), 495-515 (SKAV…TVLM), and 543-563 (ALIP…GWLG).

To phage Mu protein gp42.

It localises to the cell membrane. This chain is Mu-like prophage FluMu protein gp42, found in Haemophilus influenzae (strain ATCC 51907 / DSM 11121 / KW20 / Rd).